We begin with the raw amino-acid sequence, 199 residues long: Neurotrophic factor BDNF precursor form (199 aa).

The interval 1-23 is disordered; sequence GQGSLAYPGLRTQGNLETLSGPN. A propeptide spanning residues 1–100 is cleaved from the precursor; it reads GQGSLAYPGL…AANMSMRVRR (100 aa). The span at 12–23 shows a compositional bias: polar residues; that stretch reads TQGNLETLSGPN. N93 carries an N-linked (GlcNAc...) asparagine glycan. C113 and C180 form a disulfide bridge.

The protein belongs to the NGF-beta family.

The protein resides in the secreted. In terms of biological role, promotes the survival of neuronal populations that are all located either in the central nervous system or directly connected to it. This Morelia spilota (Carpet python) protein is Neurotrophic factor BDNF precursor form (BDNF).